The chain runs to 51 residues: Large ribosomal subunit protein bL33 (51 aa).

It belongs to the bacterial ribosomal protein bL33 family. As to quaternary structure, part of the 50S ribosomal subunit. Cross-links to the P and E site tRNAs.

In Pseudomonas aeruginosa (strain ATCC 15692 / DSM 22644 / CIP 104116 / JCM 14847 / LMG 12228 / 1C / PRS 101 / PAO1), this protein is Large ribosomal subunit protein bL33.